We begin with the raw amino-acid sequence, 126 residues long: Large ribosomal subunit protein bL21 (126 aa).

The tract at residues 105-126 (KKPSVGPRAKRTKAAPAAEAAE) is disordered.

In terms of assembly, contacts protein L20. Part of the 50S ribosomal subunit.

Functionally, this protein binds to 23S rRNA in the presence of protein L20. The polypeptide is Large ribosomal subunit protein bL21 (Rhodopseudomonas palustris (strain ATCC BAA-98 / CGA009)).